We begin with the raw amino-acid sequence, 37 residues long: Calcitonin gene-related peptide 1 (37 aa).

Cysteine 2 and cysteine 7 are joined by a disulfide. At phenylalanine 37 the chain carries Phenylalanine amide.

Belongs to the calcitonin family.

The protein localises to the secreted. Its function is as follows. CGRP1/CALCA is a peptide hormone that induces vasodilation mediated by the CALCRL-RAMP1 receptor complex. Dilates a variety of vessels including the coronary, cerebral and systemic vasculature. Its abundance in the CNS also points toward a neurotransmitter or neuromodulator role. It also elevates platelet cAMP. CGRP1 can also bind and activate CALCR-RAMP1 (AMYR1) receptor complex. The protein is Calcitonin gene-related peptide 1 (CALCA) of Ovis aries (Sheep).